The primary structure comprises 358 residues: Membrane-bound lytic murein transglycosylase C (358 aa).

The N-terminal stretch at 1-16 (MKKILALLVIAPLLIS) is a signal peptide. Cys-17 carries the N-palmitoyl cysteine lipid modification. Cys-17 carries the S-diacylglycerol cysteine lipid modification.

This sequence belongs to the transglycosylase Slt family.

The protein localises to the cell outer membrane. The enzyme catalyses Exolytic cleavage of the (1-&gt;4)-beta-glycosidic linkage between N-acetylmuramic acid (MurNAc) and N-acetylglucosamine (GlcNAc) residues in peptidoglycan, from either the reducing or the non-reducing ends of the peptidoglycan chains, with concomitant formation of a 1,6-anhydrobond in the MurNAc residue.. Functionally, murein-degrading enzyme. May play a role in recycling of muropeptides during cell elongation and/or cell division. The protein is Membrane-bound lytic murein transglycosylase C of Serratia proteamaculans (strain 568).